We begin with the raw amino-acid sequence, 572 residues long: M-phase inducer phosphatase 3 (572 aa).

Disordered stretches follow at residues 95–117 (NLGD…GKLE) and 304–354 (SPSM…QRRG). The Rhodanese domain maps to 420–527 (LVEKFFIIDC…FFPEYKELCE (108 aa)). Cys-476 is an active-site residue.

The protein belongs to the MPI phosphatase family.

It catalyses the reaction O-phospho-L-tyrosyl-[protein] + H2O = L-tyrosyl-[protein] + phosphate. In terms of biological role, this protein functions as a dosage-dependent inducer in mitotic control. It is a tyrosine protein phosphatase required for progression of the cell cycle. It may directly dephosphorylate p34(cdc2) and activate the p34(cdc2) kinase activity. In Xenopus laevis (African clawed frog), this protein is M-phase inducer phosphatase 3 (cdc25-3).